The following is a 191-amino-acid chain: Pyridoxal 5'-phosphate synthase subunit PdxT (191 aa).

An L-glutamine-binding site is contributed by 52–54; sequence GES. Catalysis depends on cysteine 81, which acts as the Nucleophile. Residues arginine 108 and 136–137 each bind L-glutamine; that span reads IR. Residues histidine 172 and glutamate 174 each act as charge relay system in the active site.

It belongs to the glutaminase PdxT/SNO family. As to quaternary structure, in the presence of PdxS, forms a dodecamer of heterodimers. Only shows activity in the heterodimer.

The catalysed reaction is aldehydo-D-ribose 5-phosphate + D-glyceraldehyde 3-phosphate + L-glutamine = pyridoxal 5'-phosphate + L-glutamate + phosphate + 3 H2O + H(+). It catalyses the reaction L-glutamine + H2O = L-glutamate + NH4(+). It functions in the pathway cofactor biosynthesis; pyridoxal 5'-phosphate biosynthesis. Its function is as follows. Catalyzes the hydrolysis of glutamine to glutamate and ammonia as part of the biosynthesis of pyridoxal 5'-phosphate. The resulting ammonia molecule is channeled to the active site of PdxS. The protein is Pyridoxal 5'-phosphate synthase subunit PdxT of Actinobacillus pleuropneumoniae serotype 7 (strain AP76).